A 340-amino-acid polypeptide reads, in one-letter code: Glucokinase (340 aa).

17–22 is an ATP binding site; the sequence is GDIGGT.

The protein belongs to the bacterial glucokinase family.

The protein resides in the cytoplasm. It carries out the reaction D-glucose + ATP = D-glucose 6-phosphate + ADP + H(+). This is Glucokinase from Allorhizobium ampelinum (strain ATCC BAA-846 / DSM 112012 / S4) (Agrobacterium vitis (strain S4)).